Reading from the N-terminus, the 427-residue chain is Glutamyl-tRNA(Gln) amidotransferase subunit D (427 aa).

The span at 1-18 shows a compositional bias: basic and acidic residues; that stretch reads MTADPGDRVRVTHGDASH. The segment at 1–20 is disordered; that stretch reads MTADPGDRVRVTHGDASHEG. An Asparaginase/glutaminase domain is found at 80-413; that stretch reads PTIALISTGG…DDPEAAMQES (334 aa). Catalysis depends on residues threonine 90, threonine 166, aspartate 167, and lysine 243.

This sequence belongs to the asparaginase 1 family. GatD subfamily. Heterodimer of GatD and GatE.

The catalysed reaction is L-glutamyl-tRNA(Gln) + L-glutamine + ATP + H2O = L-glutaminyl-tRNA(Gln) + L-glutamate + ADP + phosphate + H(+). Its function is as follows. Allows the formation of correctly charged Gln-tRNA(Gln) through the transamidation of misacylated Glu-tRNA(Gln) in organisms which lack glutaminyl-tRNA synthetase. The reaction takes place in the presence of glutamine and ATP through an activated gamma-phospho-Glu-tRNA(Gln). The GatDE system is specific for glutamate and does not act on aspartate. The chain is Glutamyl-tRNA(Gln) amidotransferase subunit D from Halobacterium salinarum (strain ATCC 29341 / DSM 671 / R1).